A 156-amino-acid polypeptide reads, in one-letter code: Snaclec A5 (156 aa).

The N-terminal stretch at 1–23 (MGRSISVSFGLLVVFLSLSGTGA) is a signal peptide. Intrachain disulfides connect cysteine 27–cysteine 38, cysteine 55–cysteine 154, and cysteine 129–cysteine 146. The 122-residue stretch at 34–155 (HEGHCYKVFN…CGKPYRFTCE (122 aa)) folds into the C-type lectin domain.

Belongs to the snaclec family. Heterodimer; disulfide-linked. In terms of tissue distribution, expressed by the venom gland.

It is found in the secreted. Its function is as follows. Interferes with one step of hemostasis (modulation of platelet aggregation, or coagulation cascade, for example). The polypeptide is Snaclec A5 (Macrovipera lebetinus (Levantine viper)).